Here is a 323-residue protein sequence, read N- to C-terminus: tRNA dimethylallyltransferase (323 aa).

Position 12-19 (glycine 12–threonine 19) interacts with ATP. Threonine 14 to threonine 19 serves as a coordination point for substrate. Interaction with substrate tRNA regions lie at residues aspartate 37–leucine 40 and glutamine 161–arginine 165.

Belongs to the IPP transferase family. In terms of assembly, monomer. Requires Mg(2+) as cofactor.

It catalyses the reaction adenosine(37) in tRNA + dimethylallyl diphosphate = N(6)-dimethylallyladenosine(37) in tRNA + diphosphate. In terms of biological role, catalyzes the transfer of a dimethylallyl group onto the adenine at position 37 in tRNAs that read codons beginning with uridine, leading to the formation of N6-(dimethylallyl)adenosine (i(6)A). This Pseudomonas putida (strain W619) protein is tRNA dimethylallyltransferase.